The chain runs to 169 residues: Ribosome maturation factor RimM (169 aa).

Residues 95 to 169 (EDGYYWTDLI…QITVDWELGY (75 aa)) form the PRC barrel domain.

Belongs to the RimM family. As to quaternary structure, binds ribosomal protein uS19.

It is found in the cytoplasm. Functionally, an accessory protein needed during the final step in the assembly of 30S ribosomal subunit, possibly for assembly of the head region. Essential for efficient processing of 16S rRNA. May be needed both before and after RbfA during the maturation of 16S rRNA. It has affinity for free ribosomal 30S subunits but not for 70S ribosomes. The sequence is that of Ribosome maturation factor RimM from Nitrosomonas europaea (strain ATCC 19718 / CIP 103999 / KCTC 2705 / NBRC 14298).